Reading from the N-terminus, the 124-residue chain is Ribonuclease pancreatic (124 aa).

A compositionally biased stretch (basic and acidic residues) spans 1-13; it reads KESAAAKFERQHM. The disordered stretch occupies residues 1 to 24; it reads KESAAAKFERQHMDSSTSSASSSN. Lys-7 and Arg-10 together coordinate substrate. His-12 functions as the Proton acceptor in the catalytic mechanism. Disulfide bonds link Cys-26-Cys-84, Cys-40-Cys-95, Cys-58-Cys-110, and Cys-65-Cys-72. N-linked (GlcNAc...) asparagine; partial glycosylation is present at Asn-34. Residues 41–45, Lys-66, and Arg-85 contribute to the substrate site; that span reads KPVNT. Catalysis depends on His-119, which acts as the Proton donor.

This sequence belongs to the pancreatic ribonuclease family. As to quaternary structure, monomer. Interacts with and forms tight 1:1 complexes with RNH1. Dimerization of two such complexes may occur. Interaction with RNH1 inhibits this protein. In terms of tissue distribution, pancreas.

It is found in the secreted. The catalysed reaction is an [RNA] containing cytidine + H2O = an [RNA]-3'-cytidine-3'-phosphate + a 5'-hydroxy-ribonucleotide-3'-[RNA].. The enzyme catalyses an [RNA] containing uridine + H2O = an [RNA]-3'-uridine-3'-phosphate + a 5'-hydroxy-ribonucleotide-3'-[RNA].. Endonuclease that catalyzes the cleavage of RNA on the 3' side of pyrimidine nucleotides. Acts on single-stranded and double-stranded RNA. The sequence is that of Ribonuclease pancreatic (RNASE1) from Ovis aries (Sheep).